The following is a 496-amino-acid chain: Angiopoietin-2 (496 aa).

Positions 1 to 18 are cleaved as a signal peptide; that stretch reads MWQIVFFTLSCDLVLAAA. N-linked (GlcNAc...) asparagine glycosylation is found at asparagine 89, asparagine 119, asparagine 133, asparagine 151, asparagine 240, and asparagine 304. Residues 166-248 are a coiled coil; that stretch reads STNKLEKQIL…VNNSVLQKQQ (83 aa). Residues 275-495 form the Fibrinogen C-terminal domain; the sequence is KEEQISFRDC…ATTMMIRPAD (221 aa). Residues cysteine 284 and cysteine 313 are joined by a disulfide bond. Positions 429, 431, 433, and 435 each coordinate Ca(2+). 2 disulfide bridges follow: cysteine 433–cysteine 435 and cysteine 437–cysteine 450.

Interacts with TEK/TIE2, competing for the same binding site as ANGPT1. Interacts with ITGA5. Interacts with SVEP1/polydom. Interacts with THBD; this interaction significantly inhibits the generation of activated PC and TAFIa/CPB2 by the thrombin/thrombomodulin complex.

Its subcellular location is the secreted. Its function is as follows. Binds to TEK/TIE2, competing for the ANGPT1 binding site, and modulating ANGPT1 signaling. Can induce tyrosine phosphorylation of TEK/TIE2 in the absence of ANGPT1. In the absence of angiogenic inducers, such as VEGF, ANGPT2-mediated loosening of cell-matrix contacts may induce endothelial cell apoptosis with consequent vascular regression. In concert with VEGF, it may facilitate endothelial cell migration and proliferation, thus serving as a permissive angiogenic signal. Involved in the regulation of lymphangiogenesis. The protein is Angiopoietin-2 (ANGPT2) of Homo sapiens (Human).